We begin with the raw amino-acid sequence, 930 residues long: 26S proteasome regulatory subunit RPN2 (930 aa).

PC repeat units follow at residues T358–Y391, G395–D428, G437–A471, A472–T506, G508–Y541, G542–R577, A578–R610, G612–Q646, A647–E684, and G690–V722. Disordered regions lie at residues A806–V840 and E911–F930. The span at D812–V840 shows a compositional bias: basic and acidic residues.

Belongs to the proteasome subunit S1 family.

Acts as a regulatory subunit of the 26S proteasome which is involved in the ATP-dependent degradation of ubiquitinated proteins. The polypeptide is 26S proteasome regulatory subunit RPN2 (RPN2) (Eremothecium gossypii (strain ATCC 10895 / CBS 109.51 / FGSC 9923 / NRRL Y-1056) (Yeast)).